A 229-amino-acid chain; its full sequence is Clathrin light chain B (229 aa).

Positions 1 to 17 (MADDFGFFSSSESGAPE) are enriched in low complexity. The interval 1-82 (MADDFGFFSS…NGDVFQEANG (82 aa)) is disordered. 2 positions are modified to phosphoserine: serine 11 and serine 13. The span at 58–73 (GPTSGAGSEDMGTTVN) shows a compositional bias: polar residues. An involved in binding clathrin heavy chain region spans residues 93–155 (ADRLTQEPES…QVEKNKINNR (63 aa)). Threonine 187 carries the post-translational modification Phosphothreonine. Residues cysteine 199 and cysteine 209 are joined by a disulfide bond. Position 204 is an N6-acetyllysine (lysine 204). A Phosphoserine modification is found at serine 217.

It belongs to the clathrin light chain family. Clathrin coats are formed from molecules containing 3 heavy chains and 3 light chains. Interacts (via N-terminus) with HIP1. Interacts with HIP1R.

The protein resides in the cytoplasmic vesicle membrane. It localises to the membrane. Its subcellular location is the coated pit. Clathrin is the major protein of the polyhedral coat of coated pits and vesicles. The chain is Clathrin light chain B (CLTB) from Homo sapiens (Human).